Reading from the N-terminus, the 149-residue chain is MALGDTIKRLFSNEEDDYYEEDGYEQSQQQEQQTTQQTSSQPRFVRQTTQSQTPAGLNSANSKIALFEPKVYSDSRSIASQILGGEAAIVNFTQIDEAQAKRILDFLGGTIYAVNGEIERIGQSIFLVTPNTFEISGTLTDNLEPNSRY.

The tract at residues 12-57 (SNEEDDYYEEDGYEQSQQQEQQTTQQTSSQPRFVRQTTQSQTPAGL) is disordered. Residues 13–24 (NEEDDYYEEDGY) show a composition bias toward acidic residues. Residues 25–41 (EQSQQQEQQTTQQTSSQ) are compositionally biased toward low complexity. Residues 46–57 (RQTTQSQTPAGL) are compositionally biased toward polar residues.

Belongs to the SepF family. In terms of assembly, homodimer. Interacts with FtsZ.

Its subcellular location is the cytoplasm. In terms of biological role, cell division protein that is part of the divisome complex and is recruited early to the Z-ring. Probably stimulates Z-ring formation, perhaps through the cross-linking of FtsZ protofilaments. Its function overlaps with FtsA. This is Cell division protein SepF from Leuconostoc mesenteroides subsp. mesenteroides (strain ATCC 8293 / DSM 20343 / BCRC 11652 / CCM 1803 / JCM 6124 / NCDO 523 / NBRC 100496 / NCIMB 8023 / NCTC 12954 / NRRL B-1118 / 37Y).